Here is a 226-residue protein sequence, read N- to C-terminus: Uracil-DNA glycosylase (226 aa).

Asp64 functions as the Proton acceptor in the catalytic mechanism.

Belongs to the uracil-DNA glycosylase (UDG) superfamily. UNG family.

Its subcellular location is the cytoplasm. The enzyme catalyses Hydrolyzes single-stranded DNA or mismatched double-stranded DNA and polynucleotides, releasing free uracil.. Functionally, excises uracil residues from the DNA which can arise as a result of misincorporation of dUMP residues by DNA polymerase or due to deamination of cytosine. This chain is Uracil-DNA glycosylase, found in Vibrio vulnificus (strain CMCP6).